Here is a 280-residue protein sequence, read N- to C-terminus: 2-dehydro-3-deoxyphosphooctonate aldolase 2 (280 aa).

Belongs to the KdsA family.

The protein resides in the cytoplasm. The enzyme catalyses D-arabinose 5-phosphate + phosphoenolpyruvate + H2O = 3-deoxy-alpha-D-manno-2-octulosonate-8-phosphate + phosphate. The protein operates within carbohydrate biosynthesis; 3-deoxy-D-manno-octulosonate biosynthesis; 3-deoxy-D-manno-octulosonate from D-ribulose 5-phosphate: step 2/3. It participates in bacterial outer membrane biogenesis; lipopolysaccharide biosynthesis. The protein is 2-dehydro-3-deoxyphosphooctonate aldolase 2 (kdsA2) of Pseudomonas putida (strain ATCC 47054 / DSM 6125 / CFBP 8728 / NCIMB 11950 / KT2440).